Consider the following 232-residue polypeptide: Glutathione-specific gamma-glutamylcyclotransferase (232 aa).

Position 10 to 15 (Val10 to Ser15) interacts with substrate. The Proton acceptor role is filled by Glu115.

This sequence belongs to the gamma-glutamylcyclotransferase family. ChaC subfamily.

The protein resides in the cytoplasm. The protein localises to the nucleus. The catalysed reaction is glutathione = L-cysteinylglycine + 5-oxo-L-proline. In terms of biological role, catalyzes the cleavage of glutathione into 5-oxo-L-proline and a Cys-Gly dipeptide. Acts specifically on glutathione, but not on other gamma-glutamyl peptides. Allows utilization of gluthathione through subsequent cleavage of the Cys-Gly dipeptide by Cys-Gly metallodipeptidase DUG1. This is Glutathione-specific gamma-glutamylcyclotransferase from Saccharomyces cerevisiae (strain ATCC 204508 / S288c) (Baker's yeast).